The primary structure comprises 69 residues: UPF0337 protein YjbJ (69 aa).

It belongs to the UPF0337 (CsbD) family.

The protein is UPF0337 protein YjbJ (yjbJ) of Escherichia coli O6:H1 (strain CFT073 / ATCC 700928 / UPEC).